The primary structure comprises 107 residues: UPF0145 protein YbjQ (107 aa).

The protein belongs to the UPF0145 family.

This is UPF0145 protein YbjQ from Salmonella gallinarum (strain 287/91 / NCTC 13346).